A 231-amino-acid polypeptide reads, in one-letter code: Ribosyldihydronicotinamide dehydrogenase [quinone] (231 aa).

Residues histidine 12, 18–21, and 104–107 each bind FAD; these read FNGS and LYWF. 127–129 contributes to the substrate binding site; that stretch reads FDV. FAD is bound by residues 148–151 and tyrosine 156; that span reads TTGG. Histidine 174 and histidine 178 together coordinate Zn(2+). Glutamate 194 is a binding site for FAD. Residue serine 197 is modified to Phosphoserine. Residue arginine 201 participates in FAD binding. Zn(2+) is bound at residue cysteine 223.

Belongs to the NAD(P)H dehydrogenase (quinone) family. As to quaternary structure, homodimer. Zn(2+) is required as a cofactor. It depends on FAD as a cofactor.

It localises to the cytoplasm. It carries out the reaction 1-(beta-D-ribofuranosyl)-1,4-dihydronicotinamide + a quinone + H(+) = beta-nicotinamide D-riboside + a quinol. Its function is as follows. The enzyme apparently serves as a quinone reductase in connection with conjugation reactions of hydroquinones involved in detoxification pathways as well as in biosynthetic processes such as the vitamin K-dependent gamma-carboxylation of glutamate residues in prothrombin synthesis. This is Ribosyldihydronicotinamide dehydrogenase [quinone] (Nqo2) from Rattus norvegicus (Rat).